We begin with the raw amino-acid sequence, 292 residues long: Acetyl-coenzyme A carboxylase carboxyl transferase subunit beta (292 aa).

The CoA carboxyltransferase N-terminal domain maps to 36 to 292 (MWSKCEKCAK…LLRMHEVDYE (257 aa)). Zn(2+) is bound by residues Cys-40, Cys-43, Cys-59, and Cys-62. Residues 40–62 (CEKCAKILYTEDLRENFNVCPNC) form a C4-type zinc finger.

The protein belongs to the AccD/PCCB family. Acetyl-CoA carboxylase is a heterohexamer composed of biotin carboxyl carrier protein (AccB), biotin carboxylase (AccC) and two subunits each of ACCase subunit alpha (AccA) and ACCase subunit beta (AccD). Zn(2+) serves as cofactor.

Its subcellular location is the cytoplasm. The catalysed reaction is N(6)-carboxybiotinyl-L-lysyl-[protein] + acetyl-CoA = N(6)-biotinyl-L-lysyl-[protein] + malonyl-CoA. It participates in lipid metabolism; malonyl-CoA biosynthesis; malonyl-CoA from acetyl-CoA: step 1/1. Component of the acetyl coenzyme A carboxylase (ACC) complex. Biotin carboxylase (BC) catalyzes the carboxylation of biotin on its carrier protein (BCCP) and then the CO(2) group is transferred by the transcarboxylase to acetyl-CoA to form malonyl-CoA. The polypeptide is Acetyl-coenzyme A carboxylase carboxyl transferase subunit beta (Clostridium perfringens (strain ATCC 13124 / DSM 756 / JCM 1290 / NCIMB 6125 / NCTC 8237 / Type A)).